The following is a 348-amino-acid chain: Rhodopsin (348 aa).

An N-acetylmethionine modification is found at Met-1. Over 1–36 (MNGTEGPNFYVPFSNATGVVRSPFEYPQYYLAEPWQ) the chain is Extracellular. Residues Asn-2 and Asn-15 are each glycosylated (N-linked (GlcNAc...) asparagine). Residues 37 to 61 (FSMLAAYMFMLIVLGFPINFLTLYV) form a helical membrane-spanning segment. Residues 62 to 73 (TVQHKKLRTPLN) are Cytoplasmic-facing. Residues 74–96 (YILLNLAVADLFMVFGGFTTTLY) form a helical membrane-spanning segment. Over 97–110 (TSLHGYFVFGPTGC) the chain is Extracellular. A disulfide bridge connects residues Cys-110 and Cys-187. Residues 111 to 133 (NLEGFFATLGGEIALWSLVVLAI) form a helical membrane-spanning segment. The short motif at 134-136 (ERY) is the 'Ionic lock' involved in activated form stabilization element. Residues 134–152 (ERYVVVCKPMSNFRFGENH) lie on the Cytoplasmic side of the membrane. A helical transmembrane segment spans residues 153–173 (AIMGLVFTWIMALACAAPPLV). The Extracellular portion of the chain corresponds to 174-202 (GWSRYIPEGMQCSCGIDYYTLKPEVNNES). Glu-201 lines the Zn(2+) pocket. A helical membrane pass occupies residues 203 to 224 (FVIYMFVVHFFIPLFVIFFCYG). Topologically, residues 225–252 (QLVFTVKEAAAQQQESATTQKAEKEVTR) are cytoplasmic. The chain crosses the membrane as a helical span at residues 253–274 (MVIIMVIAFLICWLPYAGVAFY). Residues 275–286 (IFTHQGSNFGPI) lie on the Extracellular side of the membrane. Gln-279 lines the Zn(2+) pocket. The chain crosses the membrane as a helical span at residues 287 to 308 (FMTLPAFFAKTASIYNPVIYIM). Position 296 is an N6-(retinylidene)lysine (Lys-296). Residues 309–348 (MNKQFRTCMITTLCCGKNPLGDDEASTTASKTETSQVAPA) lie on the Cytoplasmic side of the membrane. S-palmitoyl cysteine attachment occurs at residues Cys-322 and Cys-323. The tract at residues 330 to 348 (DDEASTTASKTETSQVAPA) is interaction with SAG. Residue Ser-334 is modified to Phosphoserine. 2 positions are modified to phosphothreonine: Thr-335 and Thr-336. Position 338 is a phosphoserine (Ser-338). Phosphothreonine occurs at positions 340 and 342. Ser-343 carries the phosphoserine modification.

This sequence belongs to the G-protein coupled receptor 1 family. Opsin subfamily. In terms of assembly, homodimer. May form a complex composed of RHO, GRK1 and RCVRN in a Ca(2+)-dependent manner; RCVRN prevents the interaction between GRK1 and RHO. Interacts with GRK1. Interacts (phosphorylated form) with SAG. Interacts with GNAT1. Interacts with GNAT3. SAG and G-proteins compete for a common binding site. Interacts with PRCD; the interaction promotes PRCD stability. Forms a complex with ASAP1 and ARF4. Forms a complex with ASAP1, RAB11A, Rabin8/RAB3IP, ARF4 and RAB11FIP3; the complex regulates Golgi-to-cilia rhodopsin/RHO transport in photoreceptors. Post-translationally, phosphorylated on some or all of the serine and threonine residues present in the C-terminal region. Contains one covalently linked retinal chromophore. Upon light absorption, the covalently bound 11-cis-retinal is converted to all-trans-retinal. After hydrolysis of the Schiff base and release of the covalently bound all-trans-retinal, active rhodopsin is regenerated by binding of a fresh molecule of 11-cis-retinal.

It localises to the membrane. Its subcellular location is the cell projection. The protein resides in the cilium. It is found in the photoreceptor outer segment. Photoreceptor required for image-forming vision at low light intensity. Required for photoreceptor cell viability after birth. Light-induced isomerization of 11-cis to all-trans retinal triggers a conformational change that activates signaling via G-proteins. Subsequent receptor phosphorylation mediates displacement of the bound G-protein alpha subunit by the arrestin SAG and terminates signaling. This is Rhodopsin (RHO) from Otolemur crassicaudatus (Brown greater galago).